The chain runs to 146 residues: Hemoglobin subunit beta (146 aa).

The residue at position 1 (V1) is an N-acetylvaline. The 145-residue stretch at 2–146 (HLTADEKAAV…VATALAHKYH (145 aa)) folds into the Globin domain. At T12 the chain carries Phosphothreonine. A Phosphoserine modification is found at S44. Residue K59 is modified to N6-acetyllysine. H63 provides a ligand contact to heme b. K82 carries the N6-acetyllysine modification. Position 92 (H92) interacts with heme b. C93 is subject to S-nitrosocysteine. K144 is modified (N6-acetyllysine).

It belongs to the globin family. In terms of assembly, heterotetramer of two alpha chains and two beta chains. As to expression, red blood cells.

Involved in oxygen transport from the lung to the various peripheral tissues. This chain is Hemoglobin subunit beta (HBB), found in Cephalopachus bancanus (Western tarsier).